We begin with the raw amino-acid sequence, 357 residues long: 3-dehydroquinate synthase (357 aa).

NAD(+) is bound by residues 104 to 108 (GVVGD), 128 to 129 (TT), Lys-141, and 168 to 171 (FLET). Positions 183, 243, and 260 each coordinate Zn(2+).

This sequence belongs to the sugar phosphate cyclases superfamily. Dehydroquinate synthase family. The cofactor is NAD(+). Co(2+) serves as cofactor. Zn(2+) is required as a cofactor.

The protein localises to the cytoplasm. The catalysed reaction is 7-phospho-2-dehydro-3-deoxy-D-arabino-heptonate = 3-dehydroquinate + phosphate. Its pathway is metabolic intermediate biosynthesis; chorismate biosynthesis; chorismate from D-erythrose 4-phosphate and phosphoenolpyruvate: step 2/7. Functionally, catalyzes the conversion of 3-deoxy-D-arabino-heptulosonate 7-phosphate (DAHP) to dehydroquinate (DHQ). The protein is 3-dehydroquinate synthase of Streptococcus pyogenes serotype M3 (strain ATCC BAA-595 / MGAS315).